Here is a 275-residue protein sequence, read N- to C-terminus: Large ribosomal subunit protein uL2c (275 aa).

Disordered regions lie at residues 1 to 30 and 225 to 275; these read MAIH…QKQK and MNPV…RRRK. A compositionally biased stretch (polar residues) spans 21-30; it reads QAKSTPQKQK.

This sequence belongs to the universal ribosomal protein uL2 family. In terms of assembly, part of the 50S ribosomal subunit.

It is found in the plastid. It localises to the chloroplast. This is Large ribosomal subunit protein uL2c (rpl2) from Illicium oligandrum (Star anise).